We begin with the raw amino-acid sequence, 418 residues long: Ras association domain-containing protein 5 (418 aa).

Positions 1-118 are disordered; that stretch reads MAMASPAIGQ…QPQDPRVPAE (118 aa). Position 2 is an N-acetylthreonine (Ala-2). Low complexity predominate over residues 77–89; sequence SRPARPLRPGLQQ. The Phorbol-ester/DAG-type zinc-finger motif lies at 122 to 170; sequence GHCFAELVLPGGPGWCDLCGREVLRQALRCTNCKFTCHPECRSLIQLDC. Residues Ser-182 and Ser-279 each carry the phosphoserine modification. The 91-residue stretch at 274–364 folds into the Ras-associating domain; it reads TDKRTSFYLP…LSFVLKENET (91 aa). Residue Thr-352 is modified to Phosphothreonine. Residues 366-413 form the SARAH domain; sequence EVEWDAFSIPELQNFLTILEKEEQDKIQQVQKKYDKFRQKLEEALRES.

In terms of assembly, interacts directly with activated HRAS; a RASSF5-STK4/MST1 complex probably associates with activated HRAS. Interacts with KRAS. Probably interacts with Ras-like GTPases RRAS, MRAS, RAP1B, RAP2A and RALA. Interacts with RRAS2. Can self-associate. Interacts with RSSF1 isoform A. The RSSF1 isoform A-RSSF5 heterodimer probably mediates the association of RSSF1 with HRAS. Isoform 2 interacts with activated RAP1A and ITGAL/LFA-1. Binds STK4/MST1, inhibiting STK4/MST1 autoactivation. Widely expressed. Frequently down-regulated in lung tumor cell lines and primary lung tumors.

The protein localises to the cytoplasm. It is found in the cytoskeleton. Its function is as follows. Potential tumor suppressor. Seems to be involved in lymphocyte adhesion by linking RAP1A activation upon T-cell receptor or chemokine stimulation to integrin activation. Isoform 2 stimulates lymphocyte polarization and the patch-like distribution of ITGAL/LFA-1, resulting in an enhanced adhesion to ICAM1. Together with RAP1A may participate in regulation of microtubule growth. The association of isoform 2 with activated RAP1A is required for directional movement of endothelial cells during wound healing. May be involved in regulation of Ras apoptotic function. The RASSF5-STK4/MST1 complex may mediate HRAS and KRAS induced apoptosis. In Homo sapiens (Human), this protein is Ras association domain-containing protein 5 (RASSF5).